The sequence spans 2006 residues: Sodium channel protein type 2 subunit alpha (2006 aa).

Ser-4 is modified (phosphoserine). Residues Arg-28–Ser-61 form a disordered region. Lys-38 participates in a covalent cross-link: Glycyl lysine isopeptide (Lys-Gly) (interchain with G-Cter in SUMO1). An I repeat occupies Ile-111–Gln-456. A helical transmembrane segment spans residues Leu-130–Met-148. Residues Lys-156 to Ala-176 form a helical membrane-spanning segment. Residues Trp-191 to Val-208 traverse the membrane as a helical segment. The chain crosses the membrane as a helical span at residues Ala-215–Ile-231. Residues Val-251–Phe-270 form a helical membrane-spanning segment. A disulfide bond links Cys-278 and Cys-338. Residues Asn-285, Asn-291, Asn-297, Asn-303, Asn-308, and Asn-340 are each glycosylated (N-linked (GlcNAc...) asparagine). The pore-forming intramembrane region spans Phe-370–Leu-394. Residues Met-402–Ala-422 form a helical membrane-spanning segment. Phosphoserine is present on residues Ser-468, Ser-471, Ser-484, Ser-526, Ser-528, Ser-531, Ser-553, Ser-554, Ser-558, Ser-573, Ser-576, Ser-589, Ser-610, Ser-623, Ser-687, Ser-688, and Ser-722. The disordered stretch occupies residues Ser-494–Glu-529. Over residues Lys-511–Glu-529 the composition is skewed to basic and acidic residues. The tract at residues Ser-589–Ile-635 is disordered. A compositionally biased stretch (basic and acidic residues) spans Asp-596–Ser-610. One copy of the II repeat lies at Cys-742–Gly-1014. The helical transmembrane segment at Phe-761–Met-779 threads the bilayer. The chain crosses the membrane as a helical span at residues Val-791–Lys-810. A helical transmembrane segment spans residues Asn-825–Val-844. Residues Leu-847–Ser-864 form a helical membrane-spanning segment. The helical transmembrane segment at Ala-881–Val-899 threads the bilayer. Cys-913 and Cys-919 form a disulfide bridge. The binds SCN2B stretch occupies residues Asp-918 to Cys-919. The pore-forming intramembrane region spans Phe-929 to Trp-949. Residues Cys-951 and Cys-960 are joined by a disulfide bond. The chain crosses the membrane as a helical span at residues Val-963 to Leu-983. The segment at Glu-1121 to Glu-1167 is disordered. A compositionally biased stretch (acidic residues) spans Glu-1156–Glu-1167. The stretch at Lys-1191–Leu-1505 is one III repeat. The chain crosses the membrane as a helical span at residues Phe-1211–Phe-1228. A helical membrane pass occupies residues Met-1242 to Leu-1260. A helical membrane pass occupies residues Trp-1275–Asn-1293. The chain crosses the membrane as a helical span at residues Ala-1302–Arg-1320. A helical membrane pass occupies residues Ile-1338–Val-1357. Cysteines 1367 and 1387 form a disulfide. Residues Gly-1410–Ala-1431 constitute an intramembrane region (pore-forming). Residues Tyr-1449–Ile-1470 form a helical membrane-spanning segment. Ser-1507 is modified (phosphoserine). One copy of the IV repeat lies at Ile-1514–Gln-1812. A helical membrane pass occupies residues Phe-1534–Val-1551. A helical transmembrane segment spans residues Ile-1563 to Leu-1581. A helical membrane pass occupies residues Gly-1594–Phe-1611. The helical transmembrane segment at Leu-1625–Ile-1641 threads the bilayer. Residues Leu-1661 to Phe-1678 form a helical membrane-spanning segment. Positions Phe-1701–Pro-1723 form an intramembrane region, pore-forming. A disulfide bond links Cys-1732 and Cys-1747. A helical membrane pass occupies residues Ile-1754 to Ile-1776. The IQ domain maps to Glu-1906 to Lys-1935. Phosphoserine is present on Ser-1931. Residues Lys-1934–Asp-1965 show a composition bias toward basic and acidic residues. Positions Lys-1934 to Lys-2006 are disordered. 3 positions are modified to phosphothreonine: Thr-1944, Thr-1964, and Thr-1967. A Phosphoserine modification is found at Ser-1972. The segment covering Thr-1980 to Lys-2006 has biased composition (basic and acidic residues).

The protein belongs to the sodium channel (TC 1.A.1.10) family. Nav1.2/SCN2A subfamily. Heterooligomer of a large alpha subunit and a smaller beta subunit. Heterooligomer with SCN2B or SCN4B; disulfide-linked. Interacts with NEDD4L. Interacts with CALM. Interacts with TMEM233. In terms of processing, sumoylated at Lys-38. Sumoylation is induced by hypoxia, increases voltage-gated sodium current and mediates the early response to acute hypoxia in neurons. Sumoylated SCN2A is located at the cell membrane. Expressed in brain (at protein level). Detected in hippocampus, cortex and brain stem.

The protein localises to the cell membrane. It carries out the reaction Na(+)(in) = Na(+)(out). In terms of biological role, mediates the voltage-dependent sodium ion permeability of excitable membranes. Assuming opened or closed conformations in response to the voltage difference across the membrane, the protein forms a sodium-selective channel through which Na(+) ions may pass in accordance with their electrochemical gradient. Implicated in the regulation of hippocampal replay occurring within sharp wave ripples (SPW-R) important for memory. The sequence is that of Sodium channel protein type 2 subunit alpha from Mus musculus (Mouse).